The primary structure comprises 89 residues: Elongation factor 1-beta (89 aa).

Belongs to the EF-1-beta/EF-1-delta family.

Promotes the exchange of GDP for GTP in EF-1-alpha/GDP, thus allowing the regeneration of EF-1-alpha/GTP that could then be used to form the ternary complex EF-1-alpha/GTP/AAtRNA. The protein is Elongation factor 1-beta of Methanococcus maripaludis (strain C7 / ATCC BAA-1331).